The following is a 316-amino-acid chain: HPr kinase/phosphorylase (316 aa).

Active-site residues include His-143 and Lys-164. Position 158–165 (158–165 (GEAGSGKS)) interacts with ATP. Residue Ser-165 participates in Mg(2+) binding. Catalysis depends on Asp-182, which acts as the Proton acceptor; for phosphorylation activity. Proton donor; for dephosphorylation activity. The important for the catalytic mechanism of both phosphorylation and dephosphorylation stretch occupies residues 206–215 (LEVRGLGVLN). Glu-207 serves as a coordination point for Mg(2+). Arg-251 is a catalytic residue. The segment at 272–277 (PVMPGR) is important for the catalytic mechanism of dephosphorylation.

This sequence belongs to the HPrK/P family. As to quaternary structure, homohexamer. Mg(2+) serves as cofactor.

It catalyses the reaction [HPr protein]-L-serine + ATP = [HPr protein]-O-phospho-L-serine + ADP + H(+). It carries out the reaction [HPr protein]-O-phospho-L-serine + phosphate + H(+) = [HPr protein]-L-serine + diphosphate. Catalyzes the ATP- as well as the pyrophosphate-dependent phosphorylation of a specific serine residue in HPr, a phosphocarrier protein of the phosphoenolpyruvate-dependent sugar phosphotransferase system (PTS). HprK/P also catalyzes the pyrophosphate-producing, inorganic phosphate-dependent dephosphorylation (phosphorolysis) of seryl-phosphorylated HPr (P-Ser-HPr). This is HPr kinase/phosphorylase from Xanthomonas euvesicatoria pv. vesicatoria (strain 85-10) (Xanthomonas campestris pv. vesicatoria).